Reading from the N-terminus, the 511-residue chain is GMP synthase [glutamine-hydrolyzing] (511 aa).

Residues 5 to 195 (DIIVLDFGSQ…AKYICDCEST (191 aa)) enclose the Glutamine amidotransferase type-1 domain. Residue Cys82 is the Nucleophile of the active site. Catalysis depends on residues His169 and Glu171. Positions 196–386 (WNMGNFAKIK…LGLSPDLVYR (191 aa)) constitute a GMPS ATP-PPase domain. Residue 223-229 (SGGVDSS) coordinates ATP.

In terms of assembly, homodimer.

It catalyses the reaction XMP + L-glutamine + ATP + H2O = GMP + L-glutamate + AMP + diphosphate + 2 H(+). It participates in purine metabolism; GMP biosynthesis; GMP from XMP (L-Gln route): step 1/1. Its function is as follows. Catalyzes the synthesis of GMP from XMP. The polypeptide is GMP synthase [glutamine-hydrolyzing] (Campylobacter hominis (strain ATCC BAA-381 / DSM 21671 / CCUG 45161 / LMG 19568 / NCTC 13146 / CH001A)).